A 228-amino-acid polypeptide reads, in one-letter code: Elongation factor 1-beta 1 (228 aa).

At A2 the chain carries N-acetylalanine. Residues 14-65 (LKTLEEHLAGKTYISGDQLSVDDVKVYAAVLENPGDGFPNASKWYDSVASHL) form the GST C-terminal domain. The segment at 75–139 (GVRVGGGVAP…DTKKTKESGK (65 aa)) is disordered. Acidic residues predominate over residues 95–115 (PAADGDGDDDDDIDLFADETE). Residues 116–138 (DEKKAAEEREAAKKDTKKTKESG) are compositionally biased toward basic and acidic residues.

The protein belongs to the EF-1-beta/EF-1-delta family. EF-1 is composed of 4 subunits: alpha, beta (1B-alpha=beta'), delta (1B-beta), and gamma (1B-gamma).

The protein resides in the cell membrane. Its function is as follows. EF-1-beta and EF-1-delta stimulate the exchange of GDP bound to EF-1-alpha to GTP. In Arabidopsis thaliana (Mouse-ear cress), this protein is Elongation factor 1-beta 1.